Consider the following 361-residue polypeptide: Mitochondrial import receptor subunit TOM40 homolog (361 aa).

The segment at 1-73 (MGNVLAASSP…GAAAASEDGS (73 aa)) is disordered. Residues 11 to 36 (PAGPPPPPTPSLVGLPPPPPSPPGFT) show a composition bias toward pro residues. The span at 40–50 (LGGGLGTGSST) shows a compositional bias: gly residues. Positions 51-69 (GRGSERTPGAAASGAAAAS) are enriched in low complexity.

The protein belongs to the Tom40 family. In terms of assembly, forms part of the preprotein translocase complex of the outer mitochondrial membrane (TOM complex) which consists of at least 7 different proteins (TOMM5, TOMM6, TOMM7, TOMM20, TOMM22, TOMM40 and TOMM70). Interacts with mitochondrial targeting sequences. Interacts with TIMM29; linking the TIM22 complex to the TOM complex. Forms a complex with BCAP31 (via C-terminus) which mediates the translocation of components of the mitochondrial membrane respiratory chain NADH dehydrogenase (Complex I) from the cytosol to the mitochondria. Interacts (via N-terminus) with CYP1A1 (via mitochondrial targeting signal); this interaction is required for CYP1A1 translocation across the mitochondrial outer membrane.

The protein localises to the mitochondrion outer membrane. Channel-forming protein essential for import of protein precursors into mitochondria. Plays a role in the assembly of the mitochondrial membrane respiratory chain NADH dehydrogenase (Complex I) by forming a complex with BCAP31 and mediating the translocation of Complex I components from the cytosol to the mitochondria. This is Mitochondrial import receptor subunit TOM40 homolog (Tomm40) from Mus musculus (Mouse).